A 392-amino-acid chain; its full sequence is Na(+)/H(+) antiporter NhaA (392 aa).

The next 11 helical transmembrane spans lie at 17-37, 59-79, 95-115, 125-145, 154-174, 179-199, 213-233, 254-274, 290-310, 328-348, and 363-383; these read ILLIVAAIIALIMANTPLSAL, LILWVNDALMAIFFLVVGLEV, IFPAIAAVGGMLAPALIYLFF, GWAIPAATDIAFALGVMALLG, VFLLALAIIDDLGVIVIIALF, VALVPLLLAALITIMLFILNW, FILWVCILKSGIHATIAGVIV, VLHPWVAYLILPLFAFSNAGV, VGIALGLFLGKPIGIFLFSWV, IFAVSVLCGIGFTMSIFIAGL, and LGILVGSTMAAVVGYLLLNSV.

The protein belongs to the NhaA Na(+)/H(+) (TC 2.A.33) antiporter family.

It localises to the cell inner membrane. The catalysed reaction is Na(+)(in) + 2 H(+)(out) = Na(+)(out) + 2 H(+)(in). Its function is as follows. Na(+)/H(+) antiporter that extrudes sodium in exchange for external protons. This is Na(+)/H(+) antiporter NhaA from Proteus mirabilis (strain HI4320).